Here is a 75-residue protein sequence, read N- to C-terminus: MKEGMSNNSTTSISQARKAVEQLKMEACMDRVKVSQAAADLLAYCEAHVREDPLIIPVPASENPFREKKFFCTIL.

At Cys-72 the chain carries Cysteine methyl ester. A lipid anchor (S-geranylgeranyl cysteine) is attached at Cys-72. Residues 73–75 (TIL) constitute a propeptide, removed in mature form.

Belongs to the G protein gamma family. G proteins are composed of 3 units, alpha, beta and gamma. Interacts with beta-1 and beta-2, but not with beta-3. Interacts with KCNK1. Interacts (via C-terminus) with KCNK2/TREK-1 (via N-terminus); this interaction confers ion selectivity to Cl(-) and L-glutamate. As to expression, brain, kidney, pancreas, skeletal muscle and faintly in cardiac muscle.

The protein localises to the cell membrane. Functionally, guanine nucleotide-binding proteins (G proteins) are involved as a modulator or transducer in various transmembrane signaling systems. The beta and gamma chains are required for the GTPase activity, for replacement of GDP by GTP, and for G protein-effector interaction. The protein is Guanine nucleotide-binding protein G(I)/G(S)/G(O) subunit gamma-4 (GNG4) of Homo sapiens (Human).